The chain runs to 269 residues: Autophagy-related protein 5 (269 aa).

A Glycyl lysine isopeptide (Lys-Gly) (interchain with G-Cter in ATG12) cross-link involves residue Lys102.

This sequence belongs to the ATG5 family. Conjugated with ATG12. The ATG5-ATG12 conjugate forms a complex with several units of ATG16. The ATG12-ATG5 conjugate also associates with ATG3. Post-translationally, conjugated to ATG12; which is essential for autophagy. Conjugation with ATG12 involves ATG7 as an E1-like activating enzyme and ATG10 as an E2-like conjugating enzyme.

The protein resides in the preautophagosomal structure membrane. In terms of biological role, involved in cytoplasm to vacuole transport (Cvt) and autophagic vesicle formation. Autophagy is essential for maintenance of amino acid levels and protein synthesis under nitrogen starvation. Required for selective autophagic degradation of the nucleus (nucleophagy). Also required for mitophagy, which eliminates defective or superfluous mitochondria in order to fulfill cellular energy requirements and prevent excess ROS production. Conjugation with ATG12, through a ubiquitin-like conjugating system involving ATG7 as an E1-like activating enzyme and ATG10 as an E2-like conjugating enzyme, is essential for its function. The ATG12-ATG5 conjugate acts as an E3-like enzyme which is required for lipidation of ATG8 and ATG8 association to the vesicle membranes. ATG12-ATG5 rearranges the ATG3 catalytic center and enhances its E2 activity. Required for proper vegetative growth, asexual/sexual reproduction, but, unlike several plant and animal pathogenic fungi, where ATG5 is required for infection, in B.bassiana it is dispensable for pathogenesis. In Beauveria bassiana (strain ARSEF 2860) (White muscardine disease fungus), this protein is Autophagy-related protein 5.